Here is a 274-residue protein sequence, read N- to C-terminus: D-aminopeptidase (274 aa).

Residues aspartate 8, glutamate 10, histidine 60, and histidine 104 each coordinate Zn(2+). Residue histidine 115 is the Nucleophile of the active site. Glutamate 133 lines the Zn(2+) pocket.

Belongs to the peptidase M55 family. As to quaternary structure, homodecamer. A 20 Angstroms wide channel runs through the complex, giving access to a central chamber holding the active sites. It depends on Zn(2+) as a cofactor.

Its function is as follows. Hydrolyzes N-terminal residues in D-amino acid containing peptides. Among the tested substrates, the highest activities are with D-Ala-D-Ala and D-Ala-Gly-Gly. The physiological role is not clear. This is D-aminopeptidase (dppA) from Bacillus subtilis (strain 168).